We begin with the raw amino-acid sequence, 94 residues long: Protein RnfH (94 aa).

The protein belongs to the UPF0125 (RnfH) family.

This chain is Protein RnfH, found in Sodalis glossinidius (strain morsitans).